A 418-amino-acid polypeptide reads, in one-letter code: Protease LasA (418 aa).

Residues 1 to 31 form the signal peptide; that stretch reads MQHKRSRALASPRSPFLFALLALAVGGTANA. A propeptide spanning residues 32-236 is cleaved from the precursor; that stretch reads HDDGLPAFRY…ARQLQAKAAL (205 aa). Zn(2+) is bound by residues histidine 259 and aspartate 272. A disulfide bridge links cysteine 301 with cysteine 347. Active-site proton donor/acceptor residues include histidine 317 and histidine 356. Position 358 (histidine 358) interacts with Zn(2+). A disulfide bridge connects residues cysteine 391 and cysteine 406.

The protein belongs to the peptidase M23A family. The cofactor is Zn(2+).

The protein resides in the secreted. Functionally, involved in proteolysis and elastolysis (degradation of the host protein elastin). Has staphylolytic activity (degrades pentaglycine cross-links in cell wall peptidoglycan), preferring Gly-Gly-|-X substrates where X is Ala or Gly. Enhances the elastolytic but not proteolytic activity of elastase (lasB) and elastolytic activity of other proteases. Degradation of elastin is likely to contribute to the pathogenicity of P.aeruginosa. The polypeptide is Protease LasA (lasA) (Pseudomonas aeruginosa (strain UCBPP-PA14)).